Reading from the N-terminus, the 191-residue chain is Calcium-activated potassium channel subunit beta-1 (191 aa).

The Cytoplasmic portion of the chain corresponds to 1-15; it reads MGKKLVMAQKRGETR. A helical membrane pass occupies residues 16-36; the sequence is ALCLGVAMVMCAVITYYILGT. Topologically, residues 37–157 are extracellular; that stretch reads TMLPLYQKSV…YQRLYGPQAL (121 aa). N-linked (GlcNAc...) asparagine glycans are attached at residues asparagine 80 and asparagine 142. The helical transmembrane segment at 158-178 threads the bilayer; it reads LASLFWPTFLLTGGLLIIAMV. The Cytoplasmic segment spans residues 179-191; that stretch reads KINRSLSILAAQK.

Belongs to the KCNMB (TC 8.A.14.1) family. KCNMB1 subfamily. As to quaternary structure, interacts with KCNMA1 tetramer. There are probably 4 molecules of KCMNB1 per KCNMA1 tetramer. In terms of processing, N-glycosylated.

The protein localises to the membrane. Functionally, regulatory subunit of the calcium activated potassium KCNMA1 (maxiK) channel. Modulates the calcium sensitivity and gating kinetics of KCNMA1, thereby contributing to KCNMA1 channel diversity. Increases the apparent Ca(2+)/voltage sensitivity of the KCNMA1 channel. It also modifies KCNMA1 channel kinetics and alters its pharmacological properties. It slows down the activation and the deactivation kinetics of the channel. Acts as a negative regulator of smooth muscle contraction by enhancing the calcium sensitivity to KCNMA1. Its presence is also a requirement for internal binding of the KCNMA1 channel opener dehydrosoyasaponin I (DHS-1) triterpene glycoside and for external binding of the agonist hormone 17-beta-estradiol (E2). Increases the binding activity of charybdotoxin (CTX) toxin to KCNMA1 peptide blocker by increasing the CTX association rate and decreasing the dissociation rate. This is Calcium-activated potassium channel subunit beta-1 (KCNMB1) from Oryctolagus cuniculus (Rabbit).